Here is a 183-residue protein sequence, read N- to C-terminus: Ribosome maturation factor RimM (183 aa).

Residues 104–183 (EGDYYWKDLI…TIEVDWDPGF (80 aa)) form the PRC barrel domain.

It belongs to the RimM family. Binds ribosomal protein uS19.

It localises to the cytoplasm. Its function is as follows. An accessory protein needed during the final step in the assembly of 30S ribosomal subunit, possibly for assembly of the head region. Essential for efficient processing of 16S rRNA. May be needed both before and after RbfA during the maturation of 16S rRNA. It has affinity for free ribosomal 30S subunits but not for 70S ribosomes. The protein is Ribosome maturation factor RimM of Cronobacter sakazakii (strain ATCC BAA-894) (Enterobacter sakazakii).